We begin with the raw amino-acid sequence, 863 residues long: Linoleate 9S-lipoxygenase 1 (863 aa).

Positions 32–158 constitute a PLAT domain; that stretch reads RDFTASLLDN…KYHYNRIFFA (127 aa). The region spanning 161 to 863 is the Lipoxygenase domain; it reads SYLPSQMPEA…ARGIPNSISI (703 aa). The interval 204-244 is disordered; it reads NDLGEPDRDNPRPVLGGSQKHPYPRRGRTGRIPTKKDPNSE. Fe cation contacts are provided by H518, H523, H709, N713, and I863.

Belongs to the lipoxygenase family. In terms of assembly, monomer. The cofactor is Fe cation.

It localises to the cytoplasm. The catalysed reaction is (9Z,12Z)-octadecadienoate + O2 = (9S)-hydroperoxy-(10E,12Z)-octadecadienoate. The protein operates within lipid metabolism; oxylipin biosynthesis. Functionally, plant lipoxygenase may be involved in a number of diverse aspects of plant physiology including growth and development, pest resistance, and senescence or responses to wounding. This lipoxygenase introduces molecular oxygen exclusively into the C-9 position of linoleic and linolenic. This Oryza sativa subsp. japonica (Rice) protein is Linoleate 9S-lipoxygenase 1.